The following is a 253-amino-acid chain: MRKKKFLSKVSFGSLFLLCGTVLSACTGIQADLRNLIKEATGKDIDVYKAIKTTEGKKNMITSLKKSYKVNPKDTTKLLLDAWKQSAEKGELGIPDFDFDDVIYPASKDPFTMERKIEYFQMTYQSFKDLSIEAKLSYTFNWFGDYSSGDFTAKKGDKHYFDLFPKIKSNSDPGKQFTTEKFLTKEEKIKVNGKEITRNLEWIEFSASLSFSLKGKDDVSEKSVNKFLSTFANNTEGYSSDINLFIYLEYLIK.

An N-terminal signal peptide occupies residues 1–25 (MRKKKFLSKVSFGSLFLLCGTVLSA). Cys-26 carries N-palmitoyl cysteine lipidation. The S-diacylglycerol cysteine moiety is linked to residue Cys-26.

The protein belongs to the MG439/MG440 family.

Its subcellular location is the cell membrane. This is an uncharacterized protein from Mycoplasma pneumoniae (strain ATCC 29342 / M129 / Subtype 1) (Mycoplasmoides pneumoniae).